Consider the following 205-residue polypeptide: IQ domain-containing protein F1 (205 aa).

2 stretches are compositionally biased toward basic and acidic residues: residues 1-24 (MEEK…KEMP) and 51-68 (ANEK…LSDK). The disordered stretch occupies residues 1–68 (MEEKQPQKTK…PENQKKLSDK (68 aa)). IQ domains lie at 68–97 (KDTV…SACI) and 124–153 (KEWA…AVRI).

Interacts with calmodulin.

It is found in the cytoplasmic vesicle. Its subcellular location is the secretory vesicle. The protein resides in the acrosome. Its function is as follows. Involved in sperm capacitation and acrosome reaction. This Homo sapiens (Human) protein is IQ domain-containing protein F1.